A 66-amino-acid polypeptide reads, in one-letter code: Putative antitoxin APE_0279a.1 (66 aa).

The protein belongs to the UPF0165 family.

Possibly the antitoxin component of a type II toxin-antitoxin (TA) system. The chain is Putative antitoxin APE_0279a.1 from Aeropyrum pernix (strain ATCC 700893 / DSM 11879 / JCM 9820 / NBRC 100138 / K1).